The following is a 361-amino-acid chain: Ribosomal RNA large subunit methyltransferase M (361 aa).

S-adenosyl-L-methionine is bound by residues Ser193, 226-229, Asp245, Asp265, and Asp283; that span reads CPGG. The active-site Proton acceptor is the Lys312.

This sequence belongs to the class I-like SAM-binding methyltransferase superfamily. RNA methyltransferase RlmE family. RlmM subfamily. Monomer.

It is found in the cytoplasm. It catalyses the reaction cytidine(2498) in 23S rRNA + S-adenosyl-L-methionine = 2'-O-methylcytidine(2498) in 23S rRNA + S-adenosyl-L-homocysteine + H(+). Its function is as follows. Catalyzes the 2'-O-methylation at nucleotide C2498 in 23S rRNA. In Histophilus somni (strain 129Pt) (Haemophilus somnus), this protein is Ribosomal RNA large subunit methyltransferase M.